The sequence spans 163 residues: Calcium-binding protein I (163 aa).

EF-hand domains lie at 20–42 (DKNK…NSKN), 82–117 (KPEI…LGCG), and 118–153 (NSKK…LKQD). D95, N97, D99, M101, E106, D131, N133, E135, S137, and D142 together coordinate Ca(2+).

This chain is Calcium-binding protein I (cbpI), found in Dictyostelium discoideum (Social amoeba).